We begin with the raw amino-acid sequence, 481 residues long: Aspartyl/glutamyl-tRNA(Asn/Gln) amidotransferase subunit B (481 aa).

Belongs to the GatB/GatE family. GatB subfamily. As to quaternary structure, heterotrimer of A, B and C subunits.

It carries out the reaction L-glutamyl-tRNA(Gln) + L-glutamine + ATP + H2O = L-glutaminyl-tRNA(Gln) + L-glutamate + ADP + phosphate + H(+). The enzyme catalyses L-aspartyl-tRNA(Asn) + L-glutamine + ATP + H2O = L-asparaginyl-tRNA(Asn) + L-glutamate + ADP + phosphate + 2 H(+). Its function is as follows. Allows the formation of correctly charged Asn-tRNA(Asn) or Gln-tRNA(Gln) through the transamidation of misacylated Asp-tRNA(Asn) or Glu-tRNA(Gln) in organisms which lack either or both of asparaginyl-tRNA or glutaminyl-tRNA synthetases. The reaction takes place in the presence of glutamine and ATP through an activated phospho-Asp-tRNA(Asn) or phospho-Glu-tRNA(Gln). The protein is Aspartyl/glutamyl-tRNA(Asn/Gln) amidotransferase subunit B of Fusobacterium nucleatum subsp. nucleatum (strain ATCC 25586 / DSM 15643 / BCRC 10681 / CIP 101130 / JCM 8532 / KCTC 2640 / LMG 13131 / VPI 4355).